The chain runs to 250 residues: MAADPIHQFQITKLFTLGHIGGQEIAFTNSSAYMFLSVGVISLLMIGGMAGRQLVPGRIQSVAELSYEFVAGIIRSTAGKEGMKFFPLVFSLFMFIAVSNLIGIIPYTFTVSSHLIVTVALALLVFVIVLFYGLYKNGLKFFKLFVPSGVPVYILPLVVFIEVISFFLKPVSHSVRLFANMLAGHIALKVFASFVGMLGALGFLGWMGAILPLGLTVAVTALEILVAFLQAYVFTILTCIYLNDAMHPGH.

Helical transmembrane passes span 31-51, 85-105, 115-135, 144-164, 194-214, and 217-237; these read SAYMFLSVGVISLLMIGGMAG, FFPLVFSLFMFIAVSNLIGII, LIVTVALALLVFVIVLFYGLY, LFVPSGVPVYILPLVVFIEVI, FVGMLGALGFLGWMGAILPLG, and VAVTALEILVAFLQAYVFTIL.

This sequence belongs to the ATPase A chain family. In terms of assembly, F-type ATPases have 2 components, CF(1) - the catalytic core - and CF(0) - the membrane proton channel. CF(1) has five subunits: alpha(3), beta(3), gamma(1), delta(1), epsilon(1). CF(0) has four main subunits: a, b, b' and c.

It localises to the cell inner membrane. Key component of the proton channel; it plays a direct role in the translocation of protons across the membrane. This chain is ATP synthase subunit a, found in Rhodopseudomonas palustris (strain BisB5).